Here is a 483-residue protein sequence, read N- to C-terminus: Altronate oxidoreductase (483 aa).

18 to 29 (IIQFGEGNFLRA) serves as a coordination point for NAD(+).

This sequence belongs to the mannitol dehydrogenase family. UxaB subfamily.

It carries out the reaction D-altronate + NAD(+) = keto-D-tagaturonate + NADH + H(+). It functions in the pathway carbohydrate metabolism; pentose and glucuronate interconversion. The sequence is that of Altronate oxidoreductase from Escherichia coli O1:K1 / APEC.